The following is a 477-amino-acid chain: Homeobox protein Meis2 (477 aa).

The required for interaction with PBX1 stretch occupies residues 71–191 (DALKRDKDAI…KMPIDLVIDE (121 aa)). The MEIS N-terminal domain occupies 110–193 (GGDVCSSDSF…PIDLVIDERD (84 aa)). Over residues 193-203 (DGSSKSDHEEL) the composition is skewed to basic and acidic residues. Positions 193 to 283 (DGSSKSDHEE…KKRQKKRGIF (91 aa)) are disordered. Composition is skewed to polar residues over residues 204–217 (SGSS…NPSS) and 239–251 (GHAS…SSEQ). A DNA-binding region (homeobox; TALE-type) is located at residues 276 to 338 (RQKKRGIFPK…NARRRIVQPM (63 aa)). Positions 299 to 333 (LTHPYPSEEQKKQLAQDTGLTILQVNNWFINARRR) are interaction with DNA. Residues 340–477 (DQSNRAGFLL…GGQVMDIHAQ (138 aa)) form a transcriptional activation domain region.

Belongs to the TALE/MEIS homeobox family. In terms of assembly, monomer and homodimer. Heterodimer with HOXB13. Isoform Meis2A interacts with TLX1. Isoform Meis2B interacts with HOXA13 and PBX1 isoform PBX1b. Isoform Meis2D interacts with SP1, SP3 and KLF4. Isoform Meis2D interacts with PBX1 isoform PBX1a; the interaction partially relieves MEIS2 autoinhibition. Isoform Meis2B is part of a PDX1:PBX1b:MEIS2b complex; Meis2B is recruited by PBX1b and can be replaced by isoform Meis2D in a small fraction of complexes. Can form trimeric complexes including HOXB8 and PBX2 or PBX3. In terms of tissue distribution, displays spatially restricted expression patterns in the developing nervous system, limbs, face, and in various viscera. In adult, it is mainly expressed in the brain and female genital tract, with a different distribution of the alternative splice forms in these organs. Lower expression in lung and only basal level in heart, liver, kidney, spleen, and testis. Expressed in pancreatic islets (beta-cells only).

Its subcellular location is the nucleus. It is found in the cytoplasm. The protein resides in the perinuclear region. In terms of biological role, involved in transcriptional regulation. Binds to HOX or PBX proteins to form dimers, or to a DNA-bound dimer of PBX and HOX proteins and thought to have a role in stabilization of the homeoprotein-DNA complex. Isoform Meis2B is required for the activity of a PDX1:PBX1b:MEIS2b complex in pancreatic acinar cells involved in the transcriptional activation of the ELA1 enhancer; the complex binds to the enhancer B element and cooperates with the transcription factor 1 complex (PTF1) bound to the enhancer A element; MEIS2 is not involved in complex DNA-binding. Probably in complex with PBX1, is involved in transcriptional regulation by KLF4. Isoforms Meis2B and Meis2D can bind to a EPHA8 promoter sequence containing the DNA motif 5'-CGGTCA-3'; in cooperation with a PBX protein (such as PBX2) is proposed to be involved in the transcriptional activation of EPHA8 in the developing midbrain. May be involved in regulation of myeloid differentiation. Can bind to the DNA sequence 5'-TGACAG-3'in the activator ACT sequence of the D(1A) dopamine receptor (DRD1) promoter and activate DRD1 transcription. This is Homeobox protein Meis2 (Meis2) from Mus musculus (Mouse).